The following is a 299-amino-acid chain: Formylglycine-generating enzyme (299 aa).

Cu cation contacts are provided by C263 and C268.

The protein belongs to the sulfatase-modifying factor family. Requires Cu cation as cofactor.

It catalyses the reaction L-cysteinyl-[sulfatase] + 2 a thiol + O2 = an organic disulfide + 3-oxo-L-alanyl-[sulfatase] + hydrogen sulfide + H2O + H(+). The protein operates within protein modification; sulfatase oxidation. Its function is as follows. Oxidase that catalyzes the conversion of cysteine to 3-oxoalanine on target proteins. 3-oxoalanine modification, which is also named formylglycine (fGly), occurs in the maturation of arylsulfatases and some alkaline phosphatases that use the hydrated form of 3-oxoalanine as a catalytic nucleophile. This is Formylglycine-generating enzyme from Mycobacterium tuberculosis (strain ATCC 25618 / H37Rv).